We begin with the raw amino-acid sequence, 290 residues long: Sodium/potassium-transporting ATPase subunit beta-2 (290 aa).

At 1-39 (MVIQKEKKSCGQVVEEWKEFVWNPRTHQFMGRTGTSWAF) the chain is on the cytoplasmic side. The helical; Signal-anchor for type II membrane protein transmembrane segment at 40–67 (ILLFYLVFYGFLTAMFTLTMWVMLQTVS) threads the bilayer. At 68-290 (EHTPKYQDRL…VAFKLRINKT (223 aa)) the chain is on the extracellular side. N-linked (GlcNAc...) asparagine glycans are attached at residues N96 and N118. An intrachain disulfide couples C129 to C150. 2 N-linked (GlcNAc...) asparagine glycosylation sites follow: N153 and N159. An intrachain disulfide couples C160 to C177. Residues N193, N197, and N238 are each glycosylated (N-linked (GlcNAc...) asparagine). The interval 193 to 290 (NQSMNVTCAG…VAFKLRINKT (98 aa)) is immunoglobulin-like. A disulfide bridge connects residues C200 and C261.

Belongs to the X(+)/potassium ATPases subunit beta family. As to quaternary structure, the sodium/potassium-transporting ATPase is composed of a catalytic alpha subunit, an auxiliary non-catalytic beta subunit and an additional regulatory subunit. Interacts with BSG.

It is found in the cell membrane. Functionally, this is the non-catalytic component of the active enzyme, which catalyzes the hydrolysis of ATP coupled with the exchange of Na(+) and K(+) ions across the plasma membrane. The exact function of the beta-2 subunit is not known. In terms of biological role, mediates cell adhesion of neurons and astrocytes, and promotes neurite outgrowth. The protein is Sodium/potassium-transporting ATPase subunit beta-2 (ATP1B2) of Oryctolagus cuniculus (Rabbit).